The following is a 792-amino-acid chain: uncharacterized protein (792 aa).

A substrate-binding site is contributed by 361 to 362 (WD). Residue Glu-488 is the Proton donor of the active site. 590 to 591 (KQ) provides a ligand contact to substrate. The segment at 753-792 (DSPSTIAVRDRKPLLPPPSQPPGREPVSRRHKSLIISAAR) is disordered. Residues 766–776 (LLPPPSQPPGR) are compositionally biased toward pro residues.

This sequence belongs to the glycosyl hydrolase 65 family.

This is an uncharacterized protein from Mycobacterium leprae (strain TN).